The primary structure comprises 201 residues: Ribosomal RNA large subunit methyltransferase E (201 aa).

Residues G49, W51, D69, D87, and D111 each coordinate S-adenosyl-L-methionine. K151 functions as the Proton acceptor in the catalytic mechanism.

The protein belongs to the class I-like SAM-binding methyltransferase superfamily. RNA methyltransferase RlmE family.

The protein localises to the cytoplasm. The catalysed reaction is uridine(2552) in 23S rRNA + S-adenosyl-L-methionine = 2'-O-methyluridine(2552) in 23S rRNA + S-adenosyl-L-homocysteine + H(+). Its function is as follows. Specifically methylates the uridine in position 2552 of 23S rRNA at the 2'-O position of the ribose in the fully assembled 50S ribosomal subunit. This chain is Ribosomal RNA large subunit methyltransferase E, found in Nitratidesulfovibrio vulgaris (strain DSM 19637 / Miyazaki F) (Desulfovibrio vulgaris).